A 347-amino-acid polypeptide reads, in one-letter code: Phosphoribosylformylglycinamidine cyclo-ligase (347 aa).

The protein belongs to the AIR synthase family.

The protein localises to the cytoplasm. It carries out the reaction 2-formamido-N(1)-(5-O-phospho-beta-D-ribosyl)acetamidine + ATP = 5-amino-1-(5-phospho-beta-D-ribosyl)imidazole + ADP + phosphate + H(+). Its pathway is purine metabolism; IMP biosynthesis via de novo pathway; 5-amino-1-(5-phospho-D-ribosyl)imidazole from N(2)-formyl-N(1)-(5-phospho-D-ribosyl)glycinamide: step 2/2. This chain is Phosphoribosylformylglycinamidine cyclo-ligase, found in Prochlorococcus marinus (strain MIT 9215).